The primary structure comprises 80 residues: Serine rich endogenous peptide 15 (80 aa).

The first 28 residues, 1 to 28, serve as a signal peptide directing secretion; that stretch reads MSKEKSYVIALLLSLLLCLSFQVGVSEA. 2 short sequence motifs (SCOOP motif) span residues 32–46 and 66–80; these read AVTTRYSDSPRCANG and PRVAVHSNSTKGKGP. A disordered region spans residues 37–80; that stretch reads YSDSPRCANGSSASPPTRHCPRGRPRPPTPRVAVHSNSTKGKGP. 2 short sequence motifs (sxS motif essential for MIK2 binding) span residues 38-40 and 72-74; these read SDS and SNS. Residues 71 to 80 show a composition bias toward polar residues; it reads HSNSTKGKGP.

This sequence belongs to the serine rich endogenous peptide (SCOOP) phytocytokine family. As to quaternary structure, interacts with MIK2 (via extracellular leucine-rich repeat domain); this interaction triggers the formation of complex between MIK2 and the BAK1/SERK3 and SERK4 coreceptors, and subsequent BAK1 activation by phosphorylation. Mostly expressed in leaves, and, to a lower extent, in seedlings shoots, roots, stems, siliques, seeds and flowers.

The protein resides in the cell membrane. It localises to the secreted. It is found in the extracellular space. Its subcellular location is the apoplast. The protein localises to the endoplasmic reticulum. The protein resides in the golgi apparatus. Its function is as follows. Brassicaceae-specific phytocytokine (plant endogenous peptide released into the apoplast) perceived by MIK2 in a BAK1/SERK3 and SERK4 coreceptors-dependent manner, that modulates various physiological and antimicrobial processes including growth prevention and reactive oxygen species (ROS) response regulation. Inhibits root growth. This is Serine rich endogenous peptide 15 from Arabidopsis thaliana (Mouse-ear cress).